Consider the following 166-residue polypeptide: Bacterial non-heme ferritin (166 aa).

The region spanning 2–145 (LSKDLLEALN…THIDYLNRIG (144 aa)) is the Ferritin-like diiron domain. Fe cation contacts are provided by E17, E50, H53, E94, and Q127.

It belongs to the ferritin family. Prokaryotic subfamily.

It is found in the cytoplasm. The enzyme catalyses 4 Fe(2+) + O2 + 6 H2O = 4 iron(III) oxide-hydroxide + 12 H(+). Functionally, iron-storage protein. This is Bacterial non-heme ferritin (ftnA) from Staphylococcus haemolyticus (strain JCSC1435).